The sequence spans 429 residues: Saccharopine dehydrogenase-like oxidoreductase (429 aa).

The residue at position 2 (Ala-2) is an N-acetylalanine. A phosphoserine mark is found at Ser-209, Ser-215, and Ser-217.

The protein belongs to the saccharopine dehydrogenase family.

This is Saccharopine dehydrogenase-like oxidoreductase (Sccpdh) from Mus musculus (Mouse).